The primary structure comprises 592 residues: Arginine--tRNA ligase (592 aa).

A 'HIGH' region motif is present at residues 134 to 144; sequence ANPTGPLHVGH.

It belongs to the class-I aminoacyl-tRNA synthetase family. As to quaternary structure, monomer.

It is found in the cytoplasm. The enzyme catalyses tRNA(Arg) + L-arginine + ATP = L-arginyl-tRNA(Arg) + AMP + diphosphate. The sequence is that of Arginine--tRNA ligase from Coxiella burnetii (strain CbuG_Q212) (Coxiella burnetii (strain Q212)).